Reading from the N-terminus, the 283-residue chain is Biotin synthase (283 aa).

The 230-residue stretch at 3–232 folds into the Radical SAM core domain; sequence KISNEIFLCS…NTRLMIAGGR (230 aa). C21, C25, and C28 together coordinate [4Fe-4S] cluster. Residues C65, C100, and R225 each coordinate [2Fe-2S] cluster.

It belongs to the radical SAM superfamily. Biotin synthase family. Homodimer. [4Fe-4S] cluster is required as a cofactor. [2Fe-2S] cluster serves as cofactor.

It carries out the reaction (4R,5S)-dethiobiotin + (sulfur carrier)-SH + 2 reduced [2Fe-2S]-[ferredoxin] + 2 S-adenosyl-L-methionine = (sulfur carrier)-H + biotin + 2 5'-deoxyadenosine + 2 L-methionine + 2 oxidized [2Fe-2S]-[ferredoxin]. It functions in the pathway cofactor biosynthesis; biotin biosynthesis; biotin from 7,8-diaminononanoate: step 2/2. In terms of biological role, catalyzes the conversion of dethiobiotin (DTB) to biotin by the insertion of a sulfur atom into dethiobiotin via a radical-based mechanism. The polypeptide is Biotin synthase (Helicobacter hepaticus (strain ATCC 51449 / 3B1)).